The chain runs to 435 residues: Trigger factor (435 aa).

The 86-residue stretch at 163–248 folds into the PPIase FKBP-type domain; sequence GDFVTFDFKG…IKEIKVKELP (86 aa).

The protein belongs to the FKBP-type PPIase family. Tig subfamily.

The protein resides in the cytoplasm. The enzyme catalyses [protein]-peptidylproline (omega=180) = [protein]-peptidylproline (omega=0). Involved in protein export. Acts as a chaperone by maintaining the newly synthesized protein in an open conformation. Functions as a peptidyl-prolyl cis-trans isomerase. The polypeptide is Trigger factor (Citrifermentans bemidjiense (strain ATCC BAA-1014 / DSM 16622 / JCM 12645 / Bem) (Geobacter bemidjiensis)).